Consider the following 260-residue polypeptide: 3-deoxy-manno-octulosonate cytidylyltransferase (260 aa).

It belongs to the KdsB family.

It localises to the cytoplasm. The enzyme catalyses 3-deoxy-alpha-D-manno-oct-2-ulosonate + CTP = CMP-3-deoxy-beta-D-manno-octulosonate + diphosphate. It participates in nucleotide-sugar biosynthesis; CMP-3-deoxy-D-manno-octulosonate biosynthesis; CMP-3-deoxy-D-manno-octulosonate from 3-deoxy-D-manno-octulosonate and CTP: step 1/1. It functions in the pathway bacterial outer membrane biogenesis; lipopolysaccharide biosynthesis. Functionally, activates KDO (a required 8-carbon sugar) for incorporation into bacterial lipopolysaccharide in Gram-negative bacteria. This is 3-deoxy-manno-octulosonate cytidylyltransferase from Polaromonas naphthalenivorans (strain CJ2).